Here is an 87-residue protein sequence, read N- to C-terminus: Mitochondrial import inner membrane translocase subunit TIM8 (87 aa).

Residues 44-68 carry the Twin CX3C motif motif; that stretch reads CFKKCISRVDNGNLSSQEEECLASC. 2 cysteine pairs are disulfide-bonded: cysteine 44–cysteine 68 and cysteine 48–cysteine 64.

This sequence belongs to the small Tim family. In terms of assembly, heterohexamer; composed of 3 copies of TIM8 and 3 copies of TIM13, named soluble 70 kDa complex. Associates with the TIM22 complex, whose core is composed of TIM22 and TIM54. Interacts with the transmembrane regions of multi-pass transmembrane proteins in transit.

The protein resides in the mitochondrion inner membrane. In terms of biological role, mitochondrial intermembrane chaperone that participates in the import and insertion of some multi-pass transmembrane proteins into the mitochondrial inner membrane. Also required for the transfer of beta-barrel precursors from the TOM complex to the sorting and assembly machinery (SAM complex) of the outer membrane. Acts as a chaperone-like protein that protects the hydrophobic precursors from aggregation and guide them through the mitochondrial intermembrane space. The TIM8-TIM13 complex is non essential and only mediates the import of few proteins, while the predominant TIM9-TIM10 70 kDa complex is crucial and mediates the import of much more proteins. This chain is Mitochondrial import inner membrane translocase subunit TIM8 (TIM8), found in Candida glabrata (strain ATCC 2001 / BCRC 20586 / JCM 3761 / NBRC 0622 / NRRL Y-65 / CBS 138) (Yeast).